The following is a 258-amino-acid chain: Type III pantothenate kinase (258 aa).

Residue 6 to 13 (DIGNTNTV) coordinates ATP. Substrate-binding positions include Y100 and 107–110 (GADR). Residue D109 is the Proton acceptor of the active site. D129 contributes to the K(+) binding site. Residue T132 coordinates ATP. Residue T185 participates in substrate binding.

This sequence belongs to the type III pantothenate kinase family. In terms of assembly, homodimer. It depends on NH4(+) as a cofactor. K(+) is required as a cofactor.

The protein resides in the cytoplasm. The catalysed reaction is (R)-pantothenate + ATP = (R)-4'-phosphopantothenate + ADP + H(+). It participates in cofactor biosynthesis; coenzyme A biosynthesis; CoA from (R)-pantothenate: step 1/5. In terms of biological role, catalyzes the phosphorylation of pantothenate (Pan), the first step in CoA biosynthesis. The protein is Type III pantothenate kinase of Syntrophobacter fumaroxidans (strain DSM 10017 / MPOB).